The primary structure comprises 246 residues: Transcription factor MYB113 (246 aa).

HTH myb-type domains are found at residues 5–61 (PKGL…KPSI) and 62–112 (KRGK…SKKH). 2 consecutive DNA-binding regions (H-T-H motif) follow at residues 33 to 57 (WHRVPLRTGLNRCRKSCRLRWLNYL) and 85 to 108 (WSLIAGRLPGRTANDVKNYWNTHL).

Interacts with BHLH002/EGL3/MYC146, BHLH012/MYC1 and BHLH042/TT8.

It localises to the nucleus. Functionally, transcription activator, when associated with BHLH002/EGL3/MYC146, BHLH012/MYC1, or BHLH042/TT8. In Arabidopsis thaliana (Mouse-ear cress), this protein is Transcription factor MYB113 (MYB113).